We begin with the raw amino-acid sequence, 95 residues long: Putative defensin-like protein 262 (95 aa).

The signal sequence occupies residues Met-1–Ala-26. Cystine bridges form between Cys-48–Cys-95, Cys-64–Cys-83, Cys-70–Cys-91, and Cys-74–Cys-93.

It belongs to the DEFL family.

It localises to the secreted. The sequence is that of Putative defensin-like protein 262 from Arabidopsis thaliana (Mouse-ear cress).